The sequence spans 351 residues: 1-aminocyclopropane-1-carboxylate oxidase homolog 4 (351 aa).

A Fe2OG dioxygenase domain is found at 200-304; the sequence is KSQYMVGQHY…AIVFSTFMRA (105 aa). Residues His-224, Asp-226, and His-280 each coordinate Fe cation. 2-oxoglutarate is bound at residue Arg-291.

The protein belongs to the iron/ascorbate-dependent oxidoreductase family. Requires Fe(2+) as cofactor.

This chain is 1-aminocyclopropane-1-carboxylate oxidase homolog 4, found in Arabidopsis thaliana (Mouse-ear cress).